Here is a 282-residue protein sequence, read N- to C-terminus: Bis(5'-nucleosyl)-tetraphosphatase, symmetrical (282 aa).

Belongs to the Ap4A hydrolase family.

It catalyses the reaction P(1),P(4)-bis(5'-adenosyl) tetraphosphate + H2O = 2 ADP + 2 H(+). Hydrolyzes diadenosine 5',5'''-P1,P4-tetraphosphate to yield ADP. In Klebsiella pneumoniae (strain 342), this protein is Bis(5'-nucleosyl)-tetraphosphatase, symmetrical.